Consider the following 430-residue polypeptide: Enolase (430 aa).

Gln-164 lines the (2R)-2-phosphoglycerate pocket. Residue Glu-208 is the Proton donor of the active site. Residues Asp-245, Glu-288, and Asp-315 each coordinate Mg(2+). (2R)-2-phosphoglycerate is bound by residues Lys-340, Arg-369, Ser-370, and Lys-391. Catalysis depends on Lys-340, which acts as the Proton acceptor.

The protein belongs to the enolase family. The cofactor is Mg(2+).

It is found in the cytoplasm. It localises to the secreted. The protein localises to the cell surface. The catalysed reaction is (2R)-2-phosphoglycerate = phosphoenolpyruvate + H2O. It functions in the pathway carbohydrate degradation; glycolysis; pyruvate from D-glyceraldehyde 3-phosphate: step 4/5. Its function is as follows. Catalyzes the reversible conversion of 2-phosphoglycerate (2-PG) into phosphoenolpyruvate (PEP). It is essential for the degradation of carbohydrates via glycolysis. The polypeptide is Enolase (Thermococcus gammatolerans (strain DSM 15229 / JCM 11827 / EJ3)).